The primary structure comprises 304 residues: Sulfate adenylyltransferase subunit 2 (304 aa).

This sequence belongs to the PAPS reductase family. CysD subfamily. In terms of assembly, heterodimer composed of CysD, the smaller subunit, and CysNC.

It carries out the reaction sulfate + ATP + H(+) = adenosine 5'-phosphosulfate + diphosphate. It functions in the pathway sulfur metabolism; hydrogen sulfide biosynthesis; sulfite from sulfate: step 1/3. With CysN forms the ATP sulfurylase (ATPS) that catalyzes the adenylation of sulfate producing adenosine 5'-phosphosulfate (APS) and diphosphate, the first enzymatic step in sulfur assimilation pathway. APS synthesis involves the formation of a high-energy phosphoric-sulfuric acid anhydride bond driven by GTP hydrolysis by CysN coupled to ATP hydrolysis by CysD. This is Sulfate adenylyltransferase subunit 2 from Xylella fastidiosa (strain Temecula1 / ATCC 700964).